The following is a 271-amino-acid chain: MIHRVSFYGKTTWFTKQHLIDWFLCLGIFVIESVLFNFVIPPFKRYEPESNISTNTFQLVQYPLLPDIVPVWLLMLIALGLPMVVFIGYYIKNRNSHDFHHAALGLFQAFTITMLFTDILKVSAGRYRPDYGARVATGIEAVIREGRVSFPSGHSSVSFCGMTFLSFYLCGKTKVFLKDGGNILKALVCLCPFMISALVAVSRTVDYHHDFSDILAGSVIGLSIGVFVYFMNFNSLFSKECSLPKNRINPHYARDGLLSAEYQSLSISSSL.

6 consecutive transmembrane segments (helical) span residues 23–43 (FLCL…IPPF), 68–88 (IVPV…VFIG), 102–122 (AALG…ILKV), 150–170 (FPSG…FYLC), 181–201 (GNIL…LVAV), and 211–231 (FSDI…VYFM).

It belongs to the PA-phosphatase related phosphoesterase family.

It is found in the membrane. The sequence is that of PA-phosphatase related-family protein DDB_G0284367 from Dictyostelium discoideum (Social amoeba).